We begin with the raw amino-acid sequence, 226 residues long: DELTA-thalatoxin-Avl1b (226 aa).

The N-terminal stretch at 1 to 21 is a signal peptide; sequence MRHFVVFLYMFLALSIPTAFA. Residues 22 to 45 constitute a propeptide that is removed on maturation; sequence KKHIVTKKGNHQDITNDNEGENAE. The tract at residues 50–59 is plays an important role in the hemolytic activity; sequence AVAGAVIAGG. The segment at 58–77 is N-terminal region; it reads GGELALKILTKILDEIGKID. The phosphocholine site is built by Ser101, Val134, Ser152, Pro154, Tyr180, and Tyr184. The tract at residues 152 to 167 is trp-rich region, which is important for the binding to lipid membrane; that stretch reads SVPFDYNLYTNWWNVK. The Cell attachment site, crucial for protein stability motif lies at 191 to 193; sequence KPS.

Belongs to the actinoporin family. Sea anemone subfamily. In terms of assembly, octamer or nonamer in membranes. Monomer in the soluble state.

It is found in the secreted. The protein resides in the nematocyst. The protein localises to the target cell membrane. In terms of biological role, pore-forming protein that forms cations-selective hydrophilic pores of around 1 nm and causes cytolysis. Pore formation is a multi-step process that involves specific recognition of membrane sphingomyelin (but neither cholesterol nor phosphatidylcholine) using aromatic rich region and adjacent phosphocholine (POC) binding site, firm binding to the membrane (mainly driven by hydrophobic interactions) accompanied by the transfer of the N-terminal region to the lipid-water interface and finally pore formation after oligomerization of monomers. The protein is DELTA-thalatoxin-Avl1b of Actineria villosa (Okinawan sea anemone).